The following is an 887-amino-acid chain: Exocyst complex component SEC3A (887 aa).

Coiled coils occupy residues 221 to 248 (IGEAEAFSERLKRELQALEAANVHAILE) and 281 to 301 (LRHMREDIESIETRNNKLEMQ). A disordered region spans residues 542-581 (GAGNDKKSQSNNDDGNDDDDLGIMDIDETDKKPGKNSPDL). Acidic residues predominate over residues 555–569 (DGNDDDDLGIMDIDE).

The protein belongs to the SEC3 family. In terms of assembly, the exocyst complex is composed of SEC3, SEC5, SEC6, SEC8, SEC10, EXO70A1 and EXO84B. Interacts with EXO70A1, SEC5A and ICR1, but not with ICR2. Binds to EXO70H1. Binds directly to B1L. As to expression, widely expressed. Preferentially expressed in tissues containing dividing and expanding cells, such as the shoot apical meristem, root tip, lateral root primordia and developing embryos.

It localises to the cytoplasm. The protein localises to the cytosol. Its subcellular location is the cell membrane. The protein resides in the cytoskeleton. It is found in the phragmoplast. It localises to the secreted. The protein localises to the extracellular exosome. Its function is as follows. Component of the exocyst complex involved in the docking of exocytic vesicles with fusion sites on the plasma membrane during regulated or polarized secretion. Involved in polarized cell growth and organ morphogenesis. During cytokinesis, involved in cell plate initiation, cell plate maturation and formation of new primary cell wall. During cytokinesis, involved in cell plate initiation, cell plate maturation and formation of new primary cell wall. This Arabidopsis thaliana (Mouse-ear cress) protein is Exocyst complex component SEC3A.